Reading from the N-terminus, the 771-residue chain is MGKVVGIDLGTTNSVVAVMEGGKPIVIANAEGMRTTPSVVGFNKEGELVVGQMGRRQAVLNPQNTFYGVKRFMGRRYTDLTPESKRVAYTIRRDDRDNIKVRCPRLKKDFAPEEISAMILRKLAEEASRYLGEKVTGAVITVPAYFNDSQRQATRDAGKIAGLEVLRIINEPTAASLAYGLDQGRIQKILVFDLGGGTFDVSVLEVGDGIFEVKATSGDTQLGGNDFDRRIVDWLAEKFLEAEKVDLRQDRQALQRLTEAAEKAKIELSGVGTTEINLPFITATEDGPKHLETQLSRSEFEDLCGDLVTRLQRPVKRVLKDAGLSPVQIDEVVLVGGGTRMPMVKGLVRSFIDREPNENVNPDEVVAIGAAIQAGILDGEVKDILLLDVTPLSFGLETIGGVMKKLLPRNTTIPVRKSDIFSTGENNQTVVEVHVLQGEREMASDNISLGRFKLSGIPPAPRGVPQVQVSFDIDANGILQVTARDKTTGREQSITVQGASILSEGEVNRMIQEAETFAAQDRERRERIEKRNSAKALTDQAQRRLKEVTLDFGSAFTVSYRRQVDALCSEILDSLEKDDERRLDRAQADLQDVLYELNREVRLQYDDKEEGFFEAIKKTFTGDFDDDDDYYNRRPAPRDDYRGGNDYGRYDDYNYNAPSRREAPMPRAGAGRGPSLSKDYRSTAYADWDQSRVTRQRPYQGESLGGTYDDRRSSPQDDYSRGDRQKDYDYRENAPSRSGRGGNGRYGERPAQPGRNAPLQNGWDDDDDDWF.

At Thr-198 the chain carries Phosphothreonine; by autocatalysis. The tract at residues 624–771 (FDDDDDYYNR…GWDDDDDDWF (148 aa)) is disordered. Basic and acidic residues-rich tracts occupy residues 630–652 (YYNR…RYDD) and 708–734 (YDDR…RENA).

This sequence belongs to the heat shock protein 70 family.

Its function is as follows. Acts as a chaperone. This Synechocystis sp. (strain ATCC 27184 / PCC 6803 / Kazusa) protein is Chaperone protein dnaK3 (dnaK3).